Consider the following 310-residue polypeptide: Ornithine carbamoyltransferase (310 aa).

Carbamoyl phosphate is bound by residues serine 56–threonine 59, glutamine 83, arginine 107, and histidine 134–glutamine 137. Residues asparagine 165, aspartate 229, and serine 233 to methionine 234 each bind L-ornithine. Residues cysteine 269–leucine 270 and arginine 297 each bind carbamoyl phosphate.

The protein belongs to the aspartate/ornithine carbamoyltransferase superfamily. OTCase family.

Its subcellular location is the cytoplasm. It catalyses the reaction carbamoyl phosphate + L-ornithine = L-citrulline + phosphate + H(+). The protein operates within amino-acid biosynthesis; L-arginine biosynthesis; L-arginine from L-ornithine and carbamoyl phosphate: step 1/3. In terms of biological role, reversibly catalyzes the transfer of the carbamoyl group from carbamoyl phosphate (CP) to the N(epsilon) atom of ornithine (ORN) to produce L-citrulline. This is Ornithine carbamoyltransferase from Symbiobacterium thermophilum (strain DSM 24528 / JCM 14929 / IAM 14863 / T).